Consider the following 146-residue polypeptide: Large ribosomal subunit protein uL15 (146 aa).

A disordered region spans residues 1 to 54 (MTLRLNELAPAEGAKRDNRRLGRGIGSGVGKTGGRGVKGQKSRKSGGVRPGFEG). The segment covering 23-37 (RGIGSGVGKTGGRGV) has biased composition (gly residues).

It belongs to the universal ribosomal protein uL15 family. Part of the 50S ribosomal subunit.

Its function is as follows. Binds to the 23S rRNA. The protein is Large ribosomal subunit protein uL15 of Acinetobacter baylyi (strain ATCC 33305 / BD413 / ADP1).